A 593-amino-acid chain; its full sequence is Monoterpene synthase 7, chloroplastic (593 aa).

The transit peptide at Met1–Gln39 directs the protein to the chloroplast. The Mg(2+) site is built by Asp348, Asp352, Asp491, and Glu499. Residues Asp348 to Asp352 carry the DDXXD motif motif.

It belongs to the terpene synthase family. Tpsa subfamily. Requires Mg(2+) as cofactor. The cofactor is Mn(2+). In terms of tissue distribution, highly expressed in flowers, petals and sepals, but almost undetectable in vegetative organs.

It is found in the plastid. The protein resides in the chloroplast. The enzyme catalyses (2E)-geranyl diphosphate = sabinene + diphosphate. The catalysed reaction is (2E)-geranyl diphosphate = terpinolene + diphosphate. It carries out the reaction (2E)-geranyl diphosphate = alpha-pinene + diphosphate. It catalyses the reaction (2E)-geranyl diphosphate = beta-pinene + diphosphate. The enzyme catalyses (2E)-geranyl diphosphate = beta-myrcene + diphosphate. The catalysed reaction is (2E)-geranyl diphosphate = alpha-terpinene + diphosphate. It carries out the reaction (2E)-geranyl diphosphate = beta-phellandrene + diphosphate. It catalyses the reaction (2E)-geranyl diphosphate = gamma-terpinene + diphosphate. It functions in the pathway secondary metabolite biosynthesis; terpenoid biosynthesis. Functionally, monoterpene synthase involved in the biosynthesis of volatile compounds present in floral scent. Mediates the conversion of (2E)-geranyl diphosphate (GPP) into sabinene and sub-products such as alpha-thujene, alpha-pinene, beta-pinene, myrcene, alpha-phellandrene, alpha-terpinene, beta-phellandrene, gamma-terpinene and terpinolene. Unable to use farnesyl diphosphate (FPP) as substrate. The protein is Monoterpene synthase 7, chloroplastic of Hedychium coronarium (White butterfly ginger-lily).